A 241-amino-acid chain; its full sequence is Large ribosomal subunit protein eL32 (241 aa).

Positions 1–16 are enriched in acidic residues; it reads MADNEEDVEAEEEYTE. Disordered stretches follow at residues 1 to 47 and 68 to 182; these read MADN…GADQ and VGGL…HPSG. Over residues 29 to 44 the composition is skewed to basic and acidic residues; sequence ESLREAGFESVEDVRG. Acidic residues predominate over residues 73–96; sequence VESETEAEVEEEGGEEAPDEDVET. Residues 103-116 are compositionally biased toward basic and acidic residues; sequence LTEKTPDLSDEDAR. Basic residues predominate over residues 133–159; that stretch reads DHHKKKRVSTSWRKPRGQLSKQRRGIK.

The protein belongs to the eukaryotic ribosomal protein eL32 family. Part of the 50S ribosomal subunit. Interacts weakly with protein L15.

Functionally, binds to the 23S rRNA. The polypeptide is Large ribosomal subunit protein eL32 (rpl32e) (Haloarcula marismortui (strain ATCC 43049 / DSM 3752 / JCM 8966 / VKM B-1809) (Halobacterium marismortui)).